The following is a 156-amino-acid chain: Ribosomal RNA large subunit methyltransferase H (156 aa).

S-adenosyl-L-methionine is bound by residues Leu73, Gly104, and 123 to 128 (LSPLTL).

This sequence belongs to the RNA methyltransferase RlmH family. In terms of assembly, homodimer.

Its subcellular location is the cytoplasm. The enzyme catalyses pseudouridine(1915) in 23S rRNA + S-adenosyl-L-methionine = N(3)-methylpseudouridine(1915) in 23S rRNA + S-adenosyl-L-homocysteine + H(+). Its function is as follows. Specifically methylates the pseudouridine at position 1915 (m3Psi1915) in 23S rRNA. The protein is Ribosomal RNA large subunit methyltransferase H of Aliivibrio fischeri (strain MJ11) (Vibrio fischeri).